We begin with the raw amino-acid sequence, 115 residues long: Large ribosomal subunit protein uL22 (115 aa).

This sequence belongs to the universal ribosomal protein uL22 family. As to quaternary structure, part of the 50S ribosomal subunit.

Functionally, this protein binds specifically to 23S rRNA; its binding is stimulated by other ribosomal proteins, e.g. L4, L17, and L20. It is important during the early stages of 50S assembly. It makes multiple contacts with different domains of the 23S rRNA in the assembled 50S subunit and ribosome. The globular domain of the protein is located near the polypeptide exit tunnel on the outside of the subunit, while an extended beta-hairpin is found that lines the wall of the exit tunnel in the center of the 70S ribosome. The protein is Large ribosomal subunit protein uL22 of Lactiplantibacillus plantarum (strain ATCC BAA-793 / NCIMB 8826 / WCFS1) (Lactobacillus plantarum).